Consider the following 111-residue polypeptide: Nucleoid-associated protein NMA1657 (111 aa).

The protein belongs to the YbaB/EbfC family. Homodimer.

Its subcellular location is the cytoplasm. The protein localises to the nucleoid. In terms of biological role, binds to DNA and alters its conformation. May be involved in regulation of gene expression, nucleoid organization and DNA protection. In Neisseria meningitidis serogroup A / serotype 4A (strain DSM 15465 / Z2491), this protein is Nucleoid-associated protein NMA1657.